The following is a 1269-amino-acid chain: Protein flightless-1 homolog (1269 aa).

M1 is modified (N-acetylmethionine). The segment at M1–K427 is interaction with LRRFIP1 and LRRFIP2. LRR repeat units lie at residues L7–M32, T33–L55, Q56–L78, S80–L103, D104–A126, K127–N149, L150–L173, H175–A196, M197–L222, S223–L245, S247–W268, V269–L291, K293–L316, N318–C339, P340–T363, and I365–R385. K21 is subject to N6-acetyllysine. S406 carries the post-translational modification Phosphoserine. Residue S436 is modified to Phosphoserine; by SGK3. The disordered stretch occupies residues V452 to V473. Residues A453–D465 show a composition bias toward basic and acidic residues. Residues V495–E827 are interaction with ACTL6A. 3 Gelsolin-like repeats span residues F509–L591, N629–W703, and E758–F831. The residue at position 818 (T818) is a Phosphothreonine; by SGK3. S856 and S860 each carry phosphoserine. The tract at residues K951–Q975 is disordered. A compositionally biased stretch (basic and acidic residues) spans K952–E965. Residues E966–Q975 show a composition bias toward acidic residues. Gelsolin-like repeat units lie at residues T1075–F1143 and K1181–F1254.

Interacts with actin, ACTL6A, NCOA2 and CARM1. Interacts with LRRFIP1, LRRFIP2 and MYD88. Upon LPS stimulation, LRRFIP2 competes for MYD88-binding. LRRFIP1 constitutively blocks the interaction with MyD88, even in the absence of LPS. Interacts with the nuclear receptors ESR1 and THRB. Interacts with SGK3. Interacts (via the gelsolin-like region) with TMOD1. Interacts with (via the gelsolin-like region) TMOD3. Interacts with LMOD2, VCL, GSN and DES. As to expression, strongest expression in skeletal muscle with high expression also in the heart and lung.

Its subcellular location is the nucleus. It localises to the cytoplasm. The protein localises to the cytoskeleton. It is found in the microtubule organizing center. The protein resides in the centrosome. Its subcellular location is the cell projection. It localises to the podosome. The protein localises to the cell junction. It is found in the focal adhesion. Is a regulator of actin polymerization, required for proper myofibril organization and regulation of the length of sarcomeric thin filaments. It also plays a role in the assembly of cardiomyocyte cell adhesion complexes. Regulates cytoskeletal rearrangements involved in cytokinesis and cell migration, by inhibiting Rac1-dependent paxillin phosphorylation. May play a role as coactivator in transcriptional activation by hormone-activated nuclear receptors (NR) and acts in cooperation with NCOA2 and CARM1. Involved in estrogen hormone signaling. In Homo sapiens (Human), this protein is Protein flightless-1 homolog (FLII).